The chain runs to 740 residues: 1,4-alpha-glucan branching enzyme GlgB (740 aa).

Catalysis depends on Asp419, which acts as the Nucleophile. The active-site Proton donor is the Glu472.

It belongs to the glycosyl hydrolase 13 family. GlgB subfamily. As to quaternary structure, monomer.

The enzyme catalyses Transfers a segment of a (1-&gt;4)-alpha-D-glucan chain to a primary hydroxy group in a similar glucan chain.. Its pathway is glycan biosynthesis; glycogen biosynthesis. In terms of biological role, catalyzes the formation of the alpha-1,6-glucosidic linkages in glycogen by scission of a 1,4-alpha-linked oligosaccharide from growing alpha-1,4-glucan chains and the subsequent attachment of the oligosaccharide to the alpha-1,6 position. This Thiobacillus denitrificans (strain ATCC 25259 / T1) protein is 1,4-alpha-glucan branching enzyme GlgB.